The chain runs to 749 residues: 5-methyltetrahydropteroyltriglutamate--homocysteine methyltransferase (749 aa).

5-methyltetrahydropteroyltri-L-glutamate contacts are provided by residues 15-18 and lysine 114; that span reads RELK. Residues 425–427 and glutamate 478 contribute to the L-homocysteine site; that span reads IGS. L-methionine-binding positions include 425–427 and glutamate 478; that span reads IGS. Tryptophan 555 lines the 5-methyltetrahydropteroyltri-L-glutamate pocket. Aspartate 593 provides a ligand contact to L-homocysteine. Aspartate 593 serves as a coordination point for L-methionine. Glutamate 599 contributes to the 5-methyltetrahydropteroyltri-L-glutamate binding site. The Zn(2+) site is built by histidine 636, cysteine 638, and glutamate 660. The active-site Proton donor is the histidine 689. A Zn(2+)-binding site is contributed by cysteine 721.

The protein belongs to the vitamin-B12 independent methionine synthase family. Requires Zn(2+) as cofactor.

The enzyme catalyses 5-methyltetrahydropteroyltri-L-glutamate + L-homocysteine = tetrahydropteroyltri-L-glutamate + L-methionine. Its pathway is amino-acid biosynthesis; L-methionine biosynthesis via de novo pathway; L-methionine from L-homocysteine (MetE route): step 1/1. In terms of biological role, catalyzes the transfer of a methyl group from 5-methyltetrahydrofolate to homocysteine resulting in methionine formation. The polypeptide is 5-methyltetrahydropteroyltriglutamate--homocysteine methyltransferase (Streptococcus pneumoniae serotype 2 (strain D39 / NCTC 7466)).